Consider the following 806-residue polypeptide: Putative phage-related protein YobO (806 aa).

The interval 1-23 (MVHFKNCPDPSLNANSQSHPEFS) is disordered. Positions 12-21 (LNANSQSHPE) are enriched in polar residues. 6 PbH1 repeats span residues 199–221 (VEYGWIKDVEAINAGLHGIDITS), 237–259 (SRYIWIDNCVTYGSGDDGITTHY), 260–292 (SEYIFISNCHSGNPRGTEFAEGVSNSNGIEIDD), 294–315 (SRHVWLLNNFTSGNIRGVEVKA), 419–441 (SQNITINGIKIRGFKKAGVDINL), and 448–470 (TDYIKISNFDIYKSAPKGISIGG).

The sequence is that of Putative phage-related protein YobO (yobO) from Bacillus subtilis (strain 168).